The primary structure comprises 75 residues: Protein myomixer (75 aa).

Residues 1-5 are Cytoplasmic-facing; the sequence is MPAVF. Residues 6–28 traverse the membrane as a helical segment; that stretch reads LLLRSLVVRLFGSRLAASGVQLL. The Extracellular segment spans residues 29-75; the sequence is RRILTTATGHLGTVLRNIWERISSQQSKEAILGCVLCLLNMHKKVDN. The AxLyCxL signature appears at 58–67; the sequence is AILGCVLCLL.

It belongs to the MYMX family. Specifically expressed in the developing myotome.

The protein localises to the cell membrane. Functionally, myoblast-specific protein that mediates myoblast fusion, an essential step for the formation of multi-nucleated muscle fibers. Involved in membrane fusion downstream of the lipid mixing step mediated by mymk. Acts by generating membrane stresses via its extracellular C-terminus, leading to drive fusion pore formation. This chain is Protein myomixer, found in Danio rerio (Zebrafish).